A 372-amino-acid chain; its full sequence is Chaperone protein DnaJ (372 aa).

Residues 5-69 (EFYDRLGVSK…QKRAAYDQYG (65 aa)) form the J domain. A CR-type zinc finger spans residues 129–211 (GTEKEVKYHR…CHGTGHEKQA (83 aa)). Zn(2+)-binding residues include Cys142, Cys145, Cys159, Cys162, Cys185, Cys188, Cys199, and Cys202. 4 CXXCXGXG motif repeats span residues 142–149 (CRTCNGSG), 159–166 (CGRCHGAG), 185–192 (CDVCHGRG), and 199–206 (CTTCHGTG).

It belongs to the DnaJ family. In terms of assembly, homodimer. Zn(2+) serves as cofactor.

It is found in the cytoplasm. Participates actively in the response to hyperosmotic and heat shock by preventing the aggregation of stress-denatured proteins and by disaggregating proteins, also in an autonomous, DnaK-independent fashion. Unfolded proteins bind initially to DnaJ; upon interaction with the DnaJ-bound protein, DnaK hydrolyzes its bound ATP, resulting in the formation of a stable complex. GrpE releases ADP from DnaK; ATP binding to DnaK triggers the release of the substrate protein, thus completing the reaction cycle. Several rounds of ATP-dependent interactions between DnaJ, DnaK and GrpE are required for fully efficient folding. Also involved, together with DnaK and GrpE, in the DNA replication of plasmids through activation of initiation proteins. In Streptococcus pneumoniae (strain ATCC BAA-255 / R6), this protein is Chaperone protein DnaJ.